A 70-amino-acid polypeptide reads, in one-letter code: Flexible pilin (70 aa).

A signal peptide spans 1–24 (MPNFFRNGCIALVGSVAAMGAAHA).

As to quaternary structure, homomer.

The protein localises to the fimbrium. Its function is as follows. Fimbriae (also called pili) are polar filaments radiating from the surface of the bacterium to a length of 0.5-1.5 micrometers and numbering 100-300 per cell. They enable bacteria to colonize the epithelium of specific host organs. Flexible pili possess hemagglutinating function. The polypeptide is Flexible pilin (aerA) (Aeromonas hydrophila).